Here is a 547-residue protein sequence, read N- to C-terminus: KsdD-like steroid dehydrogenase MSMEG_5835 (547 aa).

Asp-5 to Asn-36 provides a ligand contact to FAD.

The protein belongs to the FAD-dependent oxidoreductase 2 family. FAD serves as cofactor.

The protein operates within lipid metabolism; steroid biosynthesis. Able to catalyze the elimination of the C-1 and C-2 hydrogen atoms of the A-ring from the polycyclic ring structure of 3-ketosteroids, but the ketosteroid dehydrogenase activity is low compared to KsdD in the cholesterol degradation process. The low activity could be due to different substrate specificity. This is KsdD-like steroid dehydrogenase MSMEG_5835 from Mycolicibacterium smegmatis (strain ATCC 700084 / mc(2)155) (Mycobacterium smegmatis).